Consider the following 264-residue polypeptide: Short chain dehydrogenase/reductase nsrJ (264 aa).

Positions 24, 70, 97, and 130 each coordinate NADP(+). Residues Ser-146 and Ser-147 each act as proton donor in the active site. NADP(+) is bound by residues Tyr-161, Lys-165, and Thr-196. Tyr-161 serves as the catalytic Proton acceptor. Lys-165 (lowers pKa of active site Tyr) is an active-site residue.

It belongs to the short-chain dehydrogenases/reductases (SDR) family.

It participates in secondary metabolite biosynthesis. Functionally, short chain dehydrogenase/reductase; part of the gene cluster that mediates the biosynthesis of the tetrahydroxanthone dimer neosartorin, which exhibits antibacterial activity. The two different monomeric units appear to be synthesized by the same set of enzymes, among which the Baeyer-Villiger monooxygenase nsrF is the key enzyme for the divergence of the biosynthetic routes. The pathway begins with the synthesis of atrochrysone thioester by the polyketide synthase nsrB. The atrochrysone carboxyl ACP thioesterase nsrC then breaks the thioester bond and releases the atrochrysone carboxylic acid from AacuL. Atrochrysone carboxylic acid is decarboxylated by the decarboxylase nsrE, and oxidized by the anthrone oxygenase nsrD to yield emodin. Emodin is then reduced to emodin hydroquinone by the oxidoreductase nsrR. A-ring reduction by the short chain dehydrogenase nsrJ, dehydration by the scytalone dehydratase-like protein nsrI and probable spontaneous re-oxidation, results in overall deoxygenation to chrysophanol. The Baeyer-Villiger monooxygenase nsrF accepts chrysophanol as a substrate to insert one oxygen atom at two different positions to yield the precursors of both monomric units. NsrF is promiscuous/flexible in interacting with the 2 (non methylated and methylated) aromatic rings of chrysophanol, thus diverging the biosynthetic pathway at this point. After the hydrolysis of the lactones, methylesterification by the methyltransferase nsrG yields respectively moniliphenone and 2,2',6'-trihydroxy-4-methyl-6-methoxya-cyldiphenylmethanone. The next steps are the hydroxylation by the FAD-dependent monooxygenase nsrK, followed by isomerization by the monooxygenase nsrQ. The short chain dehydrogenase/reductase nsrO then catalyzes the C-5 ketoreduction to give the xanthone skeleton of blennolide C and 5-acetylblennolide A. The acetyltransferase nsrL has a strict substrate specificity and uses only blennolide A but not blennolide C to yield 5-acetylblennolide A as the single-acetylated product. In the final step of the biosynthesis, the heterodimerization of the 2 xanthones, blennolide C and 5-acetylblennolide A, is catalyzed by the cytochrome P450 monooxygenase nsrP. NsrP can utilize at least three different xanthones as its substrates to perform the dimerization reaction. The protein is Short chain dehydrogenase/reductase nsrJ of Aspergillus novofumigatus (strain IBT 16806).